The chain runs to 231 residues: 7-cyano-7-deazaguanine synthase (231 aa).

8 to 18 lines the ATP pocket; sequence FSGGQDSTTCL. Residues Cys188, Cys197, Cys200, and Cys203 each contribute to the Zn(2+) site.

This sequence belongs to the QueC family. The cofactor is Zn(2+).

It carries out the reaction 7-carboxy-7-deazaguanine + NH4(+) + ATP = 7-cyano-7-deazaguanine + ADP + phosphate + H2O + H(+). The protein operates within purine metabolism; 7-cyano-7-deazaguanine biosynthesis. Its function is as follows. Catalyzes the ATP-dependent conversion of 7-carboxy-7-deazaguanine (CDG) to 7-cyano-7-deazaguanine (preQ(0)). This chain is 7-cyano-7-deazaguanine synthase, found in Shigella flexneri serotype 5b (strain 8401).